The chain runs to 398 residues: O-methyltransferase mpaG (398 aa).

S144 contributes to the (4E,8E)-10-(4,6-dihydroxy-7-methyl-3-oxo-1,3-dihydro-2-benzofuran-5-yl)-4,8-dimethyldeca-4,8-dienoate binding site. 4-farnesyl-3,5-dihydroxy-6-methylphthalide is bound at residue S144. S144 contributes to the 6-O-desmethylmycophenolate binding site. N197 is a binding site for S-adenosyl-L-homocysteine. Y199 is a (4E,8E)-10-(4,6-dihydroxy-7-methyl-3-oxo-1,3-dihydro-2-benzofuran-5-yl)-4,8-dimethyldeca-4,8-dienoate binding site. Residue Y199 participates in 4-farnesyl-3,5-dihydroxy-6-methylphthalide binding. Residue Y199 coordinates 6-O-desmethylmycophenolate. Residues Y203, D237, G239, H244, D245, D264, and R265 each coordinate S-adenosyl-L-homocysteine. Position 264 (D264) interacts with S-adenosyl-L-methionine. (4E,8E)-10-(4,6-dihydroxy-7-methyl-3-oxo-1,3-dihydro-2-benzofuran-5-yl)-4,8-dimethyldeca-4,8-dienoate is bound by residues R265 and Q267. Residue R265 coordinates 6-O-desmethylmycophenolate. Residues D286, I287, and H302 each contribute to the S-adenosyl-L-homocysteine site. S303 is a (4E,8E)-10-(4,6-dihydroxy-7-methyl-3-oxo-1,3-dihydro-2-benzofuran-5-yl)-4,8-dimethyldeca-4,8-dienoate binding site. S303 is a 4-farnesyl-3,5-dihydroxy-6-methylphthalide binding site. S303 serves as a coordination point for 6-O-desmethylmycophenolate. The Proton acceptor role is filled by H306. Active-site residues include E335 and E362.

The protein belongs to the class I-like SAM-binding methyltransferase superfamily. Cation-independent O-methyltransferase family. COMT subfamily. As to quaternary structure, homodimer.

The protein localises to the cytoplasm. It is found in the cytosol. It carries out the reaction (4E,8E)-10-(4,6-dihydroxy-7-methyl-3-oxo-1,3-dihydro-2-benzofuran-5-yl)-4,8-dimethyldeca-4,8-dienoate + S-adenosyl-L-methionine = (4E,8E)-10-(4-hydroxy-6-methoxy-7-methyl-3-oxo-1,3-dihydro-2-benzofuran-5-yl)-4,8-dimethyldeca-4,8-dienoate + S-adenosyl-L-homocysteine + H(+). It catalyses the reaction 4-farnesyl-3,5-dihydroxy-6-methylphthalide + S-adenosyl-L-methionine = 4-farnesyl-3,5-dihydroxy-6-methoxylphthalide + S-adenosyl-L-homocysteine + H(+). The catalysed reaction is 6-O-desmethylmycophenolate + S-adenosyl-L-methionine = mycophenolate + S-adenosyl-L-homocysteine + H(+). It functions in the pathway secondary metabolite biosynthesis; terpenoid biosynthesis. In terms of biological role, O-methyltransferase; part of the gene cluster that mediates the biosynthesis of mycophenolic acid (MPA), the first isolated antibiotic natural product in the world obtained from a culture of Penicillium brevicompactum in 1893. MpaG methylates farnesyl-DHMP-3C (FDHMP-3C) to yield MFDHMP-3C. The first step of the pathway is the synthesis of 5-methylorsellinic acid (5MOA) by the cytosolic polyketide synthase mpaC. 5MOA is then converted to the phthalide compound 5,7-dihydroxy-4,6-dimethylphthalide (DHMP) by the endoplasmic reticulum-bound cytochrome P450 monooxygenase mpaDE. MpaDE first catalyzes hydroxylation of 5-MOA to 4,6-dihydroxy-2-(hydroxymethyl)-3-methylbenzoic acid (DHMB). MpaDE then acts as a lactone synthase that catalyzes the ring closure to convert DHMB into DHMP. The next step is the prenylation of DHMP by the Golgi apparatus-associated prenyltransferase mpaA to yield farnesyl-DHMP (FDHMP). The ER-bound oxygenase mpaB then mediates the oxidative cleavage the C19-C20 double bond in FDHMP to yield FDHMP-3C via a mycophenolic aldehyde intermediate. The O-methyltransferase mpaG catalyzes the methylation of FDHMP-3C to yield MFDHMP-3C. MpaG and mpaB can also switch the order in which they act and, in this case, the conversion of FDHMP to MFDHMP-3C can take place via 5-O-methyl-FDHMP (MFDHMP). After the cytosolic methylation of FDHMP-3C, MFDHMP-3C enters into peroxisomes probably via free diffusion due to its low molecular weight. Upon a peroxisomal CoA ligation reaction, catalyzed by a beta-oxidation component enzyme acyl-CoA ligase ACL891, MFDHMP-3C-CoA would then be restricted to peroxisomes for the following beta-oxidation pathway steps. The peroxisomal beta-oxidation machinery than converts MFDHMP-3C-CoA into MPA_CoA, via a beta-oxidation chain-shortening process. Finally mpaH acts as a peroxisomal acyl-CoA hydrolase with high substrate specificity toward MPA-CoA to release the final product MPA. MpaH can also hydrolyze DMMPA-CoA to release demethylmycophenolic acid (DMMPA) that is further converted to MPA by mpaG. The chain is O-methyltransferase mpaG from Penicillium brevicompactum.